Reading from the N-terminus, the 587-residue chain is Aspartate--tRNA ligase (587 aa).

Residue Glu175 coordinates L-aspartate. Residues 199 to 202 are aspartate; the sequence is QQFK. Residues Arg221 and His446 each contribute to the L-aspartate site. Residue 221–223 coordinates ATP; the sequence is RDE. Position 480 (Glu480) interacts with ATP. Arg487 serves as a coordination point for L-aspartate. Residue 532–535 coordinates ATP; that stretch reads GVDR.

The protein belongs to the class-II aminoacyl-tRNA synthetase family. Type 1 subfamily. In terms of assembly, homodimer.

The protein resides in the cytoplasm. It carries out the reaction tRNA(Asp) + L-aspartate + ATP = L-aspartyl-tRNA(Asp) + AMP + diphosphate. In terms of biological role, catalyzes the attachment of L-aspartate to tRNA(Asp) in a two-step reaction: L-aspartate is first activated by ATP to form Asp-AMP and then transferred to the acceptor end of tRNA(Asp). The polypeptide is Aspartate--tRNA ligase (Streptomyces coelicolor (strain ATCC BAA-471 / A3(2) / M145)).